Consider the following 1173-residue polypeptide: Fas-binding factor 1 (1173 aa).

A disordered region spans residues 17-168 (MALRTKKGLK…PSSSKTGLQY (152 aa)). The segment covering 46–56 (KPAEPASHAKD) has biased composition (basic and acidic residues). Residues 80–93 (AGADAEASSVSDAD) show a composition bias toward low complexity. Residue Ser172 is modified to Phosphoserine. Disordered regions lie at residues 180-225 (LAGL…GDTP) and 241-566 (TTLG…SSRE). Residues 206 to 216 (SPGAAAGQGPS) are compositionally biased toward low complexity. Composition is skewed to basic and acidic residues over residues 247-258 (DSPKAERKKTGD) and 287-299 (TGER…DKKY). Composition is skewed to polar residues over residues 331–345 (VASS…QSVS), 396–411 (SPVQ…MTPS), 468–477 (VISQKKSQNL), and 533–544 (TGSSMSWSQATT). 3 coiled-coil regions span residues 617 to 742 (TAQL…QQAS), 808 to 917 (QQRE…MNKC), and 975 to 1057 (CELR…VQRQ). Lys1002 is covalently cross-linked (Glycyl lysine isopeptide (Lys-Gly) (interchain with G-Cter in SUMO2)). The disordered stretch occupies residues 1091–1124 (ASLPGLPPRVQGPAASSRDAVQAPASSSPQCSQP). A compositionally biased stretch (low complexity) spans 1110–1124 (AVQAPASSSPQCSQP).

As to quaternary structure, interacts with PARD3. May interact with FAS cytoplasmic domain. Interacts with TRAPPC14. As to expression, broadly expressed.

It localises to the cytoplasm. Its subcellular location is the cytoskeleton. The protein resides in the microtubule organizing center. It is found in the centrosome. The protein localises to the centriole. It localises to the spindle pole. Its subcellular location is the cell junction. Keratin-binding protein required for epithelial cell polarization. Involved in apical junction complex (AJC) assembly via its interaction with PARD3. Required for ciliogenesis. The chain is Fas-binding factor 1 (Fbf1) from Mus musculus (Mouse).